A 105-amino-acid chain; its full sequence is Met repressor (105 aa).

The protein belongs to the MetJ family. In terms of assembly, homodimer.

It localises to the cytoplasm. In terms of biological role, this regulatory protein, when combined with SAM (S-adenosylmethionine) represses the expression of the methionine regulon and of enzymes involved in SAM synthesis. The sequence is that of Met repressor from Yersinia pestis bv. Antiqua (strain Antiqua).